We begin with the raw amino-acid sequence, 644 residues long: Exoribonuclease 2 (644 aa).

Positions 189-516 (REDLTALDFV…NHRLLKAVIK (328 aa)) constitute an RNB domain. The region spanning 561–643 (DTRFAAEIVD…ETRSIIARPV (83 aa)) is the S1 motif domain.

This sequence belongs to the RNR ribonuclease family. RNase II subfamily.

The protein resides in the cytoplasm. The enzyme catalyses Exonucleolytic cleavage in the 3'- to 5'-direction to yield nucleoside 5'-phosphates.. Functionally, involved in mRNA degradation. Hydrolyzes single-stranded polyribonucleotides processively in the 3' to 5' direction. This Escherichia coli O45:K1 (strain S88 / ExPEC) protein is Exoribonuclease 2.